Here is a 169-residue protein sequence, read N- to C-terminus: Allophycocyanin subunit beta-18 (169 aa).

Asn-72 is modified (N4-methylasparagine). Position 82 (Cys-82) interacts with (2R,3E)-phycocyanobilin.

Belongs to the phycobiliprotein family. In terms of assembly, heterodimer of ApcE and this beta chain. Post-translationally, contains one covalently linked bilin chromophore. The chromophore is added by phycocyanobilin lyase CpcUS.

It localises to the cellular thylakoid membrane. A variant beta-allophycocyanin (AP) which forms a complex with ApcE, a phycobilisome terminal emitter that influences energy transfer to photosystem II. The sequence is that of Allophycocyanin subunit beta-18 (apcF) from Picosynechococcus sp. (strain ATCC 27264 / PCC 7002 / PR-6) (Agmenellum quadruplicatum).